Reading from the N-terminus, the 145-residue chain is Plastocyanin, chloroplastic (145 aa).

Residues 1–48 (MASLMRKAAVAPAKATRTTVKASASLQRVAQAAGVAVAGFSLALSANA) constitute a chloroplast transit peptide. Positions 49 to 145 (ANVKLGADSG…AGMVGKVIVQ (97 aa)) constitute a Plastocyanin-like domain. Cu cation contacts are provided by H85, C130, H133, and M138.

The protein belongs to the plastocyanin family. It depends on Cu(2+) as a cofactor.

It is found in the plastid. The protein resides in the chloroplast thylakoid membrane. Its function is as follows. Participates in electron transfer between P700 and the cytochrome b6-f complex in photosystem I. This is Plastocyanin, chloroplastic (PETE) from Tetradesmus obliquus (Green alga).